The chain runs to 149 residues: Lipoprotein signal peptidase (149 aa).

3 helical membrane passes run 24 to 44 (SHIA…LTNL), 57 to 77 (KMWF…YLLW), and 81 to 101 (GKWL…GNFI). Catalysis depends on residues Asp-111 and Asp-127. A helical membrane pass occupies residues 122-142 (IFNFADSCLTVGVIFILIGVL).

It belongs to the peptidase A8 family.

It localises to the cell membrane. The enzyme catalyses Release of signal peptides from bacterial membrane prolipoproteins. Hydrolyzes -Xaa-Yaa-Zaa-|-(S,diacylglyceryl)Cys-, in which Xaa is hydrophobic (preferably Leu), and Yaa (Ala or Ser) and Zaa (Gly or Ala) have small, neutral side chains.. It functions in the pathway protein modification; lipoprotein biosynthesis (signal peptide cleavage). In terms of biological role, this protein specifically catalyzes the removal of signal peptides from prolipoproteins. The chain is Lipoprotein signal peptidase from Lactiplantibacillus plantarum (strain ATCC BAA-793 / NCIMB 8826 / WCFS1) (Lactobacillus plantarum).